The chain runs to 368 residues: Ribosomal RNA large subunit methyltransferase M (368 aa).

Residues serine 189, 222–225, aspartate 241, aspartate 261, and aspartate 278 contribute to the S-adenosyl-L-methionine site; that span reads CPGG. Lysine 307 serves as the catalytic Proton acceptor.

The protein belongs to the class I-like SAM-binding methyltransferase superfamily. RNA methyltransferase RlmE family. RlmM subfamily. As to quaternary structure, monomer.

Its subcellular location is the cytoplasm. The catalysed reaction is cytidine(2498) in 23S rRNA + S-adenosyl-L-methionine = 2'-O-methylcytidine(2498) in 23S rRNA + S-adenosyl-L-homocysteine + H(+). Functionally, catalyzes the 2'-O-methylation at nucleotide C2498 in 23S rRNA. The chain is Ribosomal RNA large subunit methyltransferase M from Yersinia pseudotuberculosis serotype O:1b (strain IP 31758).